A 132-amino-acid polypeptide reads, in one-letter code: Large ribosomal subunit protein eL8 (132 aa).

N6-acetyllysine; alternate is present on lysine 8. Lysine 8 participates in a covalent cross-link: Glycyl lysine isopeptide (Lys-Gly) (interchain with G-Cter in SUMO2); alternate. Lysine 36 participates in a covalent cross-link: Glycyl lysine isopeptide (Lys-Gly) (interchain with G-Cter in SUMO2). At lysine 128 the chain carries N6-acetyllysine.

Belongs to the eukaryotic ribosomal protein eL8 family. As to quaternary structure, component of the large ribosomal subunit. Interacts with CRY1. Interacts with DICER1, AGO2, TARBP2, MOV10 and EIF6; they form a large RNA-induced silencing complex (RISC).

It is found in the cytoplasm. Its function is as follows. Component of the large ribosomal subunit. The ribosome is a large ribonucleoprotein complex responsible for the synthesis of proteins in the cell. In Sus scrofa (Pig), this protein is Large ribosomal subunit protein eL8 (RPL7A).